The chain runs to 784 residues: LPS-assembly protein LptD (784 aa).

Residues 1-24 (MKKRIPTLLATMIATALYSQQGLA) form the signal peptide. Intrachain disulfides connect C31-C724 and C173-C725.

It belongs to the LptD family. In terms of assembly, component of the lipopolysaccharide transport and assembly complex. Interacts with LptE and LptA. In terms of processing, contains two intramolecular disulfide bonds.

It localises to the cell outer membrane. In terms of biological role, together with LptE, is involved in the assembly of lipopolysaccharide (LPS) at the surface of the outer membrane. In Shigella dysenteriae serotype 1 (strain Sd197), this protein is LPS-assembly protein LptD.